Consider the following 115-residue polypeptide: Large ribosomal subunit protein bL19 (115 aa).

The protein belongs to the bacterial ribosomal protein bL19 family.

Its function is as follows. This protein is located at the 30S-50S ribosomal subunit interface and may play a role in the structure and function of the aminoacyl-tRNA binding site. The polypeptide is Large ribosomal subunit protein bL19 (Streptococcus pneumoniae (strain JJA)).